The primary structure comprises 126 residues: Fatty acid-binding protein, liver (126 aa).

Ala2 carries the N-acetylalanine modification.

This sequence belongs to the calycin superfamily. Fatty-acid binding protein (FABP) family.

Its subcellular location is the cytoplasm. Binds free fatty acids and their coenzyme A derivatives, bilirubin, and some other small molecules in the cytoplasm. May be involved in intracellular lipid transport. The chain is Fatty acid-binding protein, liver (fabp1) from Schroederichthys bivius (Narrowmouthed catshark).